We begin with the raw amino-acid sequence, 390 residues long: Ketoisovalerate reductase BEA2 (390 aa).

70-75 (GPGNIG) is an NADP(+) binding site. Lys-285 serves as the catalytic Proton donor. Substrate is bound by residues Asn-289 and Asn-293.

The protein belongs to the ketopantoate reductase family.

The enzyme catalyses (R)-2-hydroxy-3-methylbutanoate + NADP(+) = 3-methyl-2-oxobutanoate + NADPH + H(+). With respect to regulation, the reductase activity is increased by Mg(2+) (195%), Ca(2+) (169%) and slightly increased by K(+) (123%). The reduction activity is inhibited by Fe(2+) and Co(2+), and almost totally inhibited by Cu(2+), Mn(2+), Zn(2+) and Fe(3+) (from 3% to 9% residual activity respectively). The chelating agent EDTA had little effect, suggesting Mg(2+) and Ca(2+) are not determining factors, though they could promote the reductase enzyme activity. Its function is as follows. Ketoisovalerate reductase; part of the gene cluster that mediates the biosynthesis of beauvericin (BEA), a non-ribosomal cyclic hexadepsipeptide that shows antibiotic, antifungal, insecticidal, and cancer cell antiproliferative and antihaptotactic activity. Ketoisovalerate reductase BEA2 catalyzes the NADPH-specific reduction of ketoisovaleric acid to hydroxyisovalerate, a precursor for beauvericin biosynthesis. The nonribosomal cyclodepsipeptide synthetase BEA1 then catalyzes the formation of beauvericin via condensation and cyclization of 3 dipeptidol monomers, each composed of one unit of hydroxyisovalerate and one unit of N-methyl-phenylalanine. The polypeptide is Ketoisovalerate reductase BEA2 (Gibberella intermedia (Bulb rot disease fungus)).